Reading from the N-terminus, the 379-residue chain is MAKKTKKAEEITKKFGDERRKALDDALKNIEKDFGKGAVMRLGERAEQKVQVMSSGSLALDIALGAGGYPKGRIVEIYGPESSGKTTVALHAVAQAQKEGGIAAFIDAEHALDPAYAAALGVNIDELLLSQPDSGEQDLEIAGKLIDSGAVDLVVVDSVAALVPRAEIDGDIGDSHVGLQARMMMQAMHKLTASINKTKTIAIFINQLREKVGVMFGNPETTPGGRALKFYSSVRLDVRGNTQIKGTGEHKDHNVGKETKIKVVKNKVAPPFREAFVEIMYGEGISRTGELIKIASDLDIIQKAGAWYSYNGEKIGQGSENAKKYLADNPAIFDEIDHKVRVHFGMTEDDSPVQSELVEEKNEADDLVLDLDNAIEIEE.

79–86 (GPESSGKT) serves as a coordination point for ATP.

Belongs to the RecA family.

The protein resides in the cytoplasm. In terms of biological role, can catalyze the hydrolysis of ATP in the presence of single-stranded DNA, the ATP-dependent uptake of single-stranded DNA by duplex DNA, and the ATP-dependent hybridization of homologous single-stranded DNAs. It interacts with LexA causing its activation and leading to its autocatalytic cleavage. The polypeptide is Protein RecA (Streptococcus agalactiae).